We begin with the raw amino-acid sequence, 213 residues long: Peptide methionine sulfoxide reductase MsrA (213 aa).

The active site involves cysteine 53.

Belongs to the MsrA Met sulfoxide reductase family.

The enzyme catalyses L-methionyl-[protein] + [thioredoxin]-disulfide + H2O = L-methionyl-(S)-S-oxide-[protein] + [thioredoxin]-dithiol. The catalysed reaction is [thioredoxin]-disulfide + L-methionine + H2O = L-methionine (S)-S-oxide + [thioredoxin]-dithiol. Functionally, has an important function as a repair enzyme for proteins that have been inactivated by oxidation. Catalyzes the reversible oxidation-reduction of methionine sulfoxide in proteins to methionine. The polypeptide is Peptide methionine sulfoxide reductase MsrA (Serratia proteamaculans (strain 568)).